A 102-amino-acid chain; its full sequence is MAKGQSLQDPFLNALRRERVPVSIYLVNGIKLQGQIESFDQFVILLKNTVSQMVYKHAISTVVPSRPVSHHSNNAGGSTSSNYHHGSSAQNTSAQQDSEENE.

The 60-residue stretch at 9 to 68 (DPFLNALRRERVPVSIYLVNGIKLQGQIESFDQFVILLKNTVSQMVYKHAISTVVPSRPV) folds into the Sm domain. Residues 63–102 (VPSRPVSHHSNNAGGSTSSNYHHGSSAQNTSAQQDSEENE) are disordered. The segment covering 70-96 (HHSNNAGGSTSSNYHHGSSAQNTSAQQ) has biased composition (polar residues).

Belongs to the Hfq family. As to quaternary structure, homohexamer.

RNA chaperone that binds small regulatory RNA (sRNAs) and mRNAs to facilitate mRNA translational regulation in response to envelope stress, environmental stress and changes in metabolite concentrations. Also binds with high specificity to tRNAs. This is RNA-binding protein Hfq from Escherichia coli O17:K52:H18 (strain UMN026 / ExPEC).